Consider the following 224-residue polypeptide: Pre-hexon-linking protein VIII (224 aa).

Phosphothreonine; by host is present on Thr-64. Residues 112–154 (RQLCPSQIGIKSPVLAGTGIQLSEDIPSASWIRPDGIFQLGGG) constitute a propeptide that is removed on maturation.

Belongs to the adenoviridae hexon-linking protein family. As to quaternary structure, interacts with the peripentonal hexons as well as the hexons in the facets. Part of a complex composed of the core-capsid bridging protein, the endosome lysis protein VI and the hexon-linking protein VIII; these interactions bridge the virus core to the capsid. Post-translationally, cleaved by the viral protease during virion maturation. May cause the middle segment to be shed from the capsid.

It localises to the virion. It is found in the host nucleus. Its function is as follows. Structural component of the virion that acts as a cement protein on the capsid interior and which glue the peripentonal hexons and group-of-nine hexons together. In Canis lupus familiaris (Dog), this protein is Pre-hexon-linking protein VIII.